Consider the following 840-residue polypeptide: Leucine-zipper-like transcriptional regulator 1 (840 aa).

A2 carries the N-acetylalanine modification. Kelch repeat units lie at residues 79–128, 130–185, 187–238, 239–285, 295–341, and 399–450; these read AIYV…VYGS, MFVF…VYSD, LWIF…VCRD, KMFV…QRRY, HLYV…PERA, and AMYI…FVLG. BTB domains are found at residues 443 to 537 and 667 to 736; these read CDVE…KYPR and CDIT…NMPP.

Belongs to the LZTR1 family. As to quaternary structure, homodimer. Component of the BCR(LZTR1) E3 ubiquitin ligase complex, at least composed of CUL3, LZTR1 and RBX1. Interacts with Ras (K-Ras/KRAS, N-Ras/NRAS and H-Ras/HRAS). Interacts with RAF1. Interacts with SHOC2. Interacts with PPP1CB. Post-translationally, phosphorylated on tyrosine upon induction of apoptosis, leading to its degradation by the proteasome.

The protein resides in the endomembrane system. It localises to the recycling endosome. Its subcellular location is the golgi apparatus. It participates in protein modification; protein ubiquitination. Its function is as follows. Substrate-specific adapter of a BCR (BTB-CUL3-RBX1) E3 ubiquitin-protein ligase complex that mediates ubiquitination of Ras (K-Ras/KRAS, N-Ras/NRAS and H-Ras/HRAS). Is a negative regulator of RAS-MAPK signaling that acts by controlling Ras levels and decreasing Ras association with membranes. This Homo sapiens (Human) protein is Leucine-zipper-like transcriptional regulator 1.